Here is a 1244-residue protein sequence, read N- to C-terminus: Protein STU1 (1244 aa).

2 HEAT repeats span residues 87–124 (LQGRATYQLLLERLGDHKERIRSQAAQAFTDFWPAASA) and 159–196 (LLFRIYVPALVTCLEDADGVVRDTAKSTVIELFQSAPP). The span at 232–243 (ETSSSFQSQSRS) shows a compositional bias: low complexity. Disordered regions lie at residues 232 to 326 (ETSS…GEGV), 561 to 758 (LLER…EPDV), and 795 to 998 (AFQG…DPVK). Composition is skewed to polar residues over residues 261 to 271 (RSQSVLSMRSH), 287 to 312 (KSQSKPTRSGHSSKDPTLSHTASSES), 574 to 591 (ASQSFDGSRGSQPHSTKS), and 607 to 622 (ASSNVPSRPESAQSSF). 3 stretches are compositionally biased toward low complexity: residues 652–663 (SASLSSAPMRPA), 690–703 (AQSKASSPSDSPQK), and 837–850 (PPSRIPISPSYSSR). 2 stretches are compositionally biased toward basic and acidic residues: residues 863–872 (LDSRRSRGES) and 979–998 (KVEGSERRRSLSPRSKDPVK). HEAT repeat units lie at residues 1038 to 1075 (TKYEDILMALLEALEKPDGDKGAPSGRSLDLKTQVLVT) and 1126 to 1163 (CNPPQVIDAILDLLETEERSFESYRMVAMGSYILSGLL).

The protein belongs to the CLASP family. As to quaternary structure, interacts with microtubules.

It is found in the cytoplasm. Its subcellular location is the cytoskeleton. The protein resides in the nucleus. The protein localises to the spindle. Functionally, microtubule binding protein that promotes the stabilization of dynamic microtubules. Required for mitotic spindle formation. This is Protein STU1 (STU1) from Coccidioides immitis (strain RS) (Valley fever fungus).